The following is a 501-amino-acid chain: Aspartate--tRNA ligase, cytoplasmic (501 aa).

A Phosphothreonine modification is found at threonine 52. Lysine 74 is modified (N6-acetyllysine). Position 229 (glutamate 229) interacts with L-aspartate. Serine 249 bears the Phosphoserine mark. Residues 251-254 (QLYK) are aspartate. Arginine 273 is a binding site for L-aspartate. Residues 273 to 275 (RAE) and 281 to 283 (RHL) contribute to the ATP site. N6-acetyllysine is present on lysine 374. Residues 411-415 (KQSNS) are binding site for the 3'-end of tRNA. Position 424 (glutamate 424) interacts with ATP. Positions 427 and 431 each coordinate L-aspartate. 472–475 (GLER) contributes to the ATP binding site. The residue at position 500 (threonine 500) is a Phosphothreonine; by PKA.

It belongs to the class-II aminoacyl-tRNA synthetase family. Type 2 subfamily. In terms of assembly, homodimer. Part of a multisubunit complex that groups tRNA ligases for Arg (RARS1), Asp (DARS1), Gln (QARS1), Ile (IARS1), Leu (LARS1), Lys (KARS1), Met (MARS1) the bifunctional ligase for Glu and Pro (EPRS1) and the auxiliary subunits AIMP1/p43, AIMP2/p38 and EEF1E1/p18.

It localises to the cytoplasm. It carries out the reaction tRNA(Asp) + L-aspartate + ATP = L-aspartyl-tRNA(Asp) + AMP + diphosphate. Catalyzes the specific attachment of an amino acid to its cognate tRNA in a 2 step reaction: the amino acid (AA) is first activated by ATP to form AA-AMP and then transferred to the acceptor end of the tRNA. This chain is Aspartate--tRNA ligase, cytoplasmic (DARS1), found in Bos taurus (Bovine).